Reading from the N-terminus, the 302-residue chain is EFTALSLLFSLLLLTASAEQCGKQAGGARCAAGLCCSNFGWCGNTNDYCGPGKCQSQCPSGPSPKPPTPGPGPSGGDIGSVISNSMFDQMLKHRNDNACQGKNNFYSYNAFINAARSFGGFGTTGDTTARKREIAAFFAQTSHETTGGWPTAPDGPYAWGYCFLREQGSPGDYCTPSGQWPCAPGRKYFGRGPIQISHNYNYGPCGRAIGVDLLNNPDLVATDPVISFKSAIWFWMTPQSPKPSCHDVIIGRWQPSAADRAANRLPGFGVITNIINGGLECGRGSDSRVQDRIGFYRRYCGI.

The first 18 residues, 1-18, serve as a signal peptide directing secretion; that stretch reads EFTALSLLFSLLLLTASA. In terms of domain architecture, Chitin-binding type-1 spans 19 to 60; it reads EQCGKQAGGARCAAGLCCSNFGWCGNTNDYCGPGKCQSQCPS. Cystine bridges form between cysteine 21-cysteine 36, cysteine 30-cysteine 42, cysteine 35-cysteine 49, and cysteine 54-cysteine 58. Residues 59–79 are disordered; it reads PSGPSPKPPTPGPGPSGGDIG. Residues 61–72 show a composition bias toward pro residues; that stretch reads GPSPKPPTPGPG. Catalysis depends on glutamate 144, which acts as the Proton donor. Cysteine 162 and cysteine 182 are disulfide-bonded.

Belongs to the glycosyl hydrolase 19 family. Chitinase class I subfamily.

It is found in the vacuole. The enzyme catalyses Random endo-hydrolysis of N-acetyl-beta-D-glucosaminide (1-&gt;4)-beta-linkages in chitin and chitodextrins.. In terms of biological role, defense against chitin-containing fungal pathogens. This is Endochitinase 4 (CHTB4) from Solanum tuberosum (Potato).